A 472-amino-acid polypeptide reads, in one-letter code: Proline--tRNA ligase (472 aa).

It belongs to the class-II aminoacyl-tRNA synthetase family. ProS type 3 subfamily. In terms of assembly, homodimer.

It is found in the cytoplasm. The catalysed reaction is tRNA(Pro) + L-proline + ATP = L-prolyl-tRNA(Pro) + AMP + diphosphate. Its function is as follows. Catalyzes the attachment of proline to tRNA(Pro) in a two-step reaction: proline is first activated by ATP to form Pro-AMP and then transferred to the acceptor end of tRNA(Pro). This chain is Proline--tRNA ligase, found in Ureaplasma urealyticum serovar 10 (strain ATCC 33699 / Western).